Here is a 334-residue protein sequence, read N- to C-terminus: GTPase Obg (334 aa).

The Obg domain maps to 1 to 159 (MRFVDEVVIK…KEVRLELNLL (159 aa)). One can recognise an OBG-type G domain in the interval 160 to 331 (ADVALLGLPN…LAKKLNEFLQ (172 aa)). GTP contacts are provided by residues 166–173 (GLPNAGKS), 191–195 (FTTMY), 212–215 (DIPG), 282–285 (NKID), and 312–314 (SAA). Mg(2+) is bound by residues Ser-173 and Thr-193.

The protein belongs to the TRAFAC class OBG-HflX-like GTPase superfamily. OBG GTPase family. As to quaternary structure, monomer. It depends on Mg(2+) as a cofactor.

The protein localises to the cytoplasm. An essential GTPase which binds GTP, GDP and possibly (p)ppGpp with moderate affinity, with high nucleotide exchange rates and a fairly low GTP hydrolysis rate. Plays a role in control of the cell cycle, stress response, ribosome biogenesis and in those bacteria that undergo differentiation, in morphogenesis control. This is GTPase Obg from Francisella tularensis subsp. holarctica (strain FTNF002-00 / FTA).